The chain runs to 570 residues: Sulfite reductase [NADPH] hemoprotein beta-component 1 (570 aa).

[4Fe-4S] cluster-binding residues include Cys-434, Cys-440, Cys-479, and Cys-483. Cys-483 lines the siroheme pocket.

It belongs to the nitrite and sulfite reductase 4Fe-4S domain family. As to quaternary structure, alpha(8)-beta(8). The alpha component is a flavoprotein, the beta component is a hemoprotein. Siroheme serves as cofactor. Requires [4Fe-4S] cluster as cofactor.

It carries out the reaction hydrogen sulfide + 3 NADP(+) + 3 H2O = sulfite + 3 NADPH + 4 H(+). It functions in the pathway sulfur metabolism; hydrogen sulfide biosynthesis; hydrogen sulfide from sulfite (NADPH route): step 1/1. Functionally, component of the sulfite reductase complex that catalyzes the 6-electron reduction of sulfite to sulfide. This is one of several activities required for the biosynthesis of L-cysteine from sulfate. This is Sulfite reductase [NADPH] hemoprotein beta-component 1 from Klebsiella pneumoniae (strain 342).